A 437-amino-acid chain; its full sequence is Cobyrinate a,c-diamide synthase (437 aa).

A GATase cobBQ-type domain is found at 243 to 433 (IAAIAYDSAF…SHFHFSSARG (191 aa)). Cys324 serves as the catalytic Nucleophile.

It belongs to the CobB/CbiA family. Mg(2+) serves as cofactor.

It carries out the reaction cob(II)yrinate + 2 L-glutamine + 2 ATP + 2 H2O = cob(II)yrinate a,c diamide + 2 L-glutamate + 2 ADP + 2 phosphate + 2 H(+). The protein operates within cofactor biosynthesis; adenosylcobalamin biosynthesis; cob(II)yrinate a,c-diamide from sirohydrochlorin (anaerobic route): step 10/10. Catalyzes the ATP-dependent amidation of the two carboxylate groups at positions a and c of cobyrinate, using either L-glutamine or ammonia as the nitrogen source. This chain is Cobyrinate a,c-diamide synthase, found in Sulfurisphaera tokodaii (strain DSM 16993 / JCM 10545 / NBRC 100140 / 7) (Sulfolobus tokodaii).